A 94-amino-acid polypeptide reads, in one-letter code: Co-chaperonin GroES (94 aa).

It belongs to the GroES chaperonin family. In terms of assembly, heptamer of 7 subunits arranged in a ring. Interacts with the chaperonin GroEL.

The protein localises to the cytoplasm. Its function is as follows. Together with the chaperonin GroEL, plays an essential role in assisting protein folding. The GroEL-GroES system forms a nano-cage that allows encapsulation of the non-native substrate proteins and provides a physical environment optimized to promote and accelerate protein folding. GroES binds to the apical surface of the GroEL ring, thereby capping the opening of the GroEL channel. This chain is Co-chaperonin GroES, found in Geobacillus stearothermophilus (Bacillus stearothermophilus).